The primary structure comprises 472 residues: Uronate isomerase (472 aa).

It belongs to the metallo-dependent hydrolases superfamily. Uronate isomerase family.

The enzyme catalyses D-glucuronate = D-fructuronate. The catalysed reaction is aldehydo-D-galacturonate = keto-D-tagaturonate. Its pathway is carbohydrate metabolism; pentose and glucuronate interconversion. In Xanthomonas euvesicatoria pv. vesicatoria (strain 85-10) (Xanthomonas campestris pv. vesicatoria), this protein is Uronate isomerase.